Reading from the N-terminus, the 877-residue chain is Translation initiation factor IF-2 (877 aa).

A compositionally biased stretch (basic and acidic residues) spans 66-115 (PKKESTAKKTTKKDEVKKEEKKTTTKKESKNPAKAVSEKKDEVKKEEKQP). Disordered regions lie at residues 66-127 (PKKE…LEEK), 187-208 (SDESLKRKKKEKKNHPVASKKE), and 241-290 (ENKP…KESE). Residues 192–201 (KRKKKEKKNH) are compositionally biased toward basic residues. The segment covering 245 to 265 (AQPTNKKQPNILKQSLNNSIN) has biased composition (polar residues). Residues 376 to 543 (QRAPVITIMG…IVLLQADILE (168 aa)) form the tr-type G domain. A G1 region spans residues 385 to 392 (GHVDHGKT). 385-392 (GHVDHGKT) serves as a coordination point for GTP. The tract at residues 410–414 (GITQH) is G2. The tract at residues 431–434 (DTPG) is G3. Residues 431–435 (DTPGH) and 485–488 (NKMD) each bind GTP. The interval 485–488 (NKMD) is G4. The G5 stretch occupies residues 521–523 (SAK).

This sequence belongs to the TRAFAC class translation factor GTPase superfamily. Classic translation factor GTPase family. IF-2 subfamily.

It is found in the cytoplasm. Its function is as follows. One of the essential components for the initiation of protein synthesis. Protects formylmethionyl-tRNA from spontaneous hydrolysis and promotes its binding to the 30S ribosomal subunits. Also involved in the hydrolysis of GTP during the formation of the 70S ribosomal complex. This chain is Translation initiation factor IF-2, found in Campylobacter lari (strain RM2100 / D67 / ATCC BAA-1060).